Here is a 122-residue protein sequence, read N- to C-terminus: Methylglyoxal synthase (122 aa).

An MGS-like domain is found at 1-122; the sequence is MRIALIAHDK…DLFIKHLKGK (122 aa). Substrate contacts are provided by residues His-8, Lys-12, 34–37, and 54–55; these read TGTT and SG. Asp-60 acts as the Proton donor/acceptor in catalysis. Substrate is bound at residue His-87.

Belongs to the methylglyoxal synthase family.

It catalyses the reaction dihydroxyacetone phosphate = methylglyoxal + phosphate. In terms of biological role, catalyzes the formation of methylglyoxal from dihydroxyacetone phosphate. This chain is Methylglyoxal synthase, found in Acholeplasma laidlawii (strain PG-8A).